Reading from the N-terminus, the 384-residue chain is Dual-specificity RNA methyltransferase RlmN (384 aa).

Glu93 (proton acceptor) is an active-site residue. The region spanning 99–339 (EETRGTLCVS…TTIRKTRGDD (241 aa)) is the Radical SAM core domain. A disulfide bond links Cys106 and Cys344. Positions 113, 117, and 120 each coordinate [4Fe-4S] cluster. Residues 170 to 171 (GE), Ser202, 224 to 226 (SLH), and Asn301 each bind S-adenosyl-L-methionine. Cys344 functions as the S-methylcysteine intermediate in the catalytic mechanism.

Belongs to the radical SAM superfamily. RlmN family. [4Fe-4S] cluster serves as cofactor.

The protein resides in the cytoplasm. The enzyme catalyses adenosine(2503) in 23S rRNA + 2 reduced [2Fe-2S]-[ferredoxin] + 2 S-adenosyl-L-methionine = 2-methyladenosine(2503) in 23S rRNA + 5'-deoxyadenosine + L-methionine + 2 oxidized [2Fe-2S]-[ferredoxin] + S-adenosyl-L-homocysteine. The catalysed reaction is adenosine(37) in tRNA + 2 reduced [2Fe-2S]-[ferredoxin] + 2 S-adenosyl-L-methionine = 2-methyladenosine(37) in tRNA + 5'-deoxyadenosine + L-methionine + 2 oxidized [2Fe-2S]-[ferredoxin] + S-adenosyl-L-homocysteine. Specifically methylates position 2 of adenine 2503 in 23S rRNA and position 2 of adenine 37 in tRNAs. m2A2503 modification seems to play a crucial role in the proofreading step occurring at the peptidyl transferase center and thus would serve to optimize ribosomal fidelity. The chain is Dual-specificity RNA methyltransferase RlmN from Cupriavidus necator (strain ATCC 17699 / DSM 428 / KCTC 22496 / NCIMB 10442 / H16 / Stanier 337) (Ralstonia eutropha).